A 332-amino-acid chain; its full sequence is Small ribosomal subunit biogenesis GTPase RsgA (332 aa).

One can recognise a CP-type G domain in the interval 103 to 259 (RQQLIAANLD…LIDTPGMREL (157 aa)). GTP is bound by residues 148 to 151 (TKVD) and 201 to 209 (GSSGAGKST). The Zn(2+) site is built by cysteine 281, cysteine 286, histidine 288, and cysteine 294.

It belongs to the TRAFAC class YlqF/YawG GTPase family. RsgA subfamily. As to quaternary structure, monomer. Associates with 30S ribosomal subunit, binds 16S rRNA. The cofactor is Zn(2+).

It is found in the cytoplasm. Its function is as follows. One of several proteins that assist in the late maturation steps of the functional core of the 30S ribosomal subunit. Helps release RbfA from mature subunits. May play a role in the assembly of ribosomal proteins into the subunit. Circularly permuted GTPase that catalyzes slow GTP hydrolysis, GTPase activity is stimulated by the 30S ribosomal subunit. The sequence is that of Small ribosomal subunit biogenesis GTPase RsgA from Xylella fastidiosa (strain M23).